The following is a 418-amino-acid chain: Nisin biosynthesis protein NisC (418 aa).

The protein to B.subtilis SpaC and S.epidermidis EpiC.

Functionally, could be implicated in the processing or the export process of the nisin lantibiotic. This is Nisin biosynthesis protein NisC (nisC) from Lactococcus lactis subsp. lactis (Streptococcus lactis).